A 140-amino-acid polypeptide reads, in one-letter code: Large ribosomal subunit protein uL14 (140 aa).

It belongs to the universal ribosomal protein uL14 family. In terms of assembly, component of the large ribosomal subunit.

Its subcellular location is the cytoplasm. In terms of biological role, component of the large ribosomal subunit. The ribosome is a large ribonucleoprotein complex responsible for the synthesis of proteins in the cell. This chain is Large ribosomal subunit protein uL14 (rpl23), found in Ictalurus punctatus (Channel catfish).